A 447-amino-acid chain; its full sequence is UDP-N-acetylmuramate--L-alanine ligase (447 aa).

107–113 (GTHGKTT) lines the ATP pocket.

Belongs to the MurCDEF family.

Its subcellular location is the cytoplasm. It catalyses the reaction UDP-N-acetyl-alpha-D-muramate + L-alanine + ATP = UDP-N-acetyl-alpha-D-muramoyl-L-alanine + ADP + phosphate + H(+). The protein operates within cell wall biogenesis; peptidoglycan biosynthesis. Functionally, cell wall formation. This Rubrobacter xylanophilus (strain DSM 9941 / JCM 11954 / NBRC 16129 / PRD-1) protein is UDP-N-acetylmuramate--L-alanine ligase.